A 3330-amino-acid polypeptide reads, in one-letter code: MAVALGRAPRSLPLLLTLLLLLLLRMSPSWSVVGQDHPMSSRSLHPPYFNLAQAARIWATATCGERDPEVSRPRPELFCKLVGGPAAQGSGHTIQGQFCDYCNSEDSRKAHPASHAIDGSERWWQSPPLSSGTQYNQVNLTLDLGQLFHVAYILIKFANSPRPDLWILERSVDFGSTYSPWQYFAHSRRDCVEQFGQEANMAITQDDQMLCVTEYSRIVPLENGEIVVSLINGRPGAKKFAFSDTLREFTKATNIRLRFLRTNTLLGHLISKAERDPTVTRRYYYSIKDISVGGRCVCNGHAEACSADNPEKQFRCECQHHTCGDTCNRCCAGYNQRRWQPAGQEQHNECEACNCHGHAVDCYYDPDVEHQQASLNSKGVYAGGGVCINCQHNTAGVNCEKCAKGYFRPHGVPVDALHGCIPCSCDPERADDCDQGSGHCHCKPNFSGDYCETCADGYYNFPFCLRIPVFPNYTPSPEDPVAGNIKGCDCNLEGVLPEICDDRGRCLCRPGVEGPQCDSCRSGSYSFPICQACQCSTIGSYPVPCDPGNGQCDCLPGITGRQCDRCLSGAYDFPYCQGSGSVCHPAGTLDSSLGYCQCKQHVASPTCSVCKPLYWNLAKENPRGCSECQCHEAGTLSGIGECGQEDGDCSCKAHVTGDACDTCEDGFFSLEKSNYFGCQGCQCDIGGALTTMCSGPSGVCQCREHVEGKQCQRPENNYYFPDLHHMKYEVEDGTGPNGRNLRFGFDPLVFPEFSWRGYAPMTSVQNEVRVRLSVRQSSLSLFRIVLRYISPGTEAISGRITLYSSQGDSDALQSRKITFPPSKEPAFVTVPGNGFAGPFSITPGTWIACIQVEGVLLDYLVLLPRDYYEAFTLQVPVTEPCAHTGSPQDNCLLYQHLPLTAFSCTLACEARHFLLDGELRPLAMRQPTPTHPAMVDLSGREVELQLRLRVPQVGHYVVLLEYATEVEQLFVVDVNLKSSGSALAGQVNIYSCKYSIPCRSVVIDSLSRTAVHELLADADIQLKAHMAHFLLYHICIIPAEEFSTEYLRPQVHCIASYRQHANPSASCVSLAHETPPTASILDATSRGLFSALPHEPSSPADGVTLKAPQSQVTLKGLIPHLGRHVFVIHFYQAEHPGFPTEVIVNGGRQWSGSFLASFCPHLLGCRDQVISDGQVEFDISEAEVAVTVKIPDGKSLTLVRVLVVPAENYDYQILHKTTVDKSSEFISSCGGDSFYIDPQAASGFCKNSARSLVAFYHNGAIPCECDPAGTAGHHCSPEGGQCPCRPNVIGRQCSRCATGYYGFPYCKPCNCGRRLCEEVTGKCLCPPHTVRPQCEVCEMNSFNFHPVAGCDVCNCSRKGTIEAAVSECDRDSGQCRCKPRVTGQQCDKCAPGFYQFPECVPCSCNRDGTEPSVCDPETGACMCKENVEGPQCQLCREGSFYLDPTNPKGCTKCFCFGVNTDCQSSHKQRAKFVDMMGWRLETADGVDVPVSFNPGSNSMVADLQELPPSVHSASWVAPPSYLGDKVSSYGGYLTYHAKSFGLPGDMVLLGKQPDVQLTGQHMSLIHKEPSDPRPDRLHHGRVQVIEGNFRHEGSSAPVSREELMTVLSRLERLHIRGLHFTETQRLTLGEVGLEEASDTGSGPRAHLVEMCACPPDYTGDSCQGCRPGYYWDNKSLPVGRCVPCNCNGHSNRCQDGSGICINCQHNTAGEHCERCQAGHYGNAIHGSCRVCPCPHTNSFATGCAVDGGAVRCACKPGYTGTQCERCAPGYFGNPQKFGGSCQPCNCNSNGQLGPCDPLTGDCVNQEPKDGSPAEECDDCDSCVMTLLNDLASMGEELRLVKSKLQGLSVSTGALEQIRHMETQAKDLRNQLLGFRSATSSHGSKMDDLEKELSHLNREFETLQEKAQVNSRKAQTLYNNIDQTIQSAKELDMKIKNIVQNVHILLKQMARPGGEGTDLPVGDWSRELAEAQRMMRDLRSRDFKKHLQEAEAEKMEAQLLLHRIRTWLESHQVENNGLLKNIRDSLNDYEDKLQDLRSILQEAAAQAKQATGINHENEGVLGAIQRQMKEMDSLKNDFTKYLATADSSLLQTNNLLQQMDKSQKEYESLAAALNGARQELSDRVRELSRSGGKAPLVVEAEKHAQSLQELAKQLEEIKRNTSGDELVRCAVDAATAYENILNAIRAAEDAASKATSASKSAFQTVIKEDLPKRAKTLSSDSEELLNEAKMTQKRLQQVSPALNSLQQTLKTVSVQKDLLDANLTVARDDLHGIQRGDIDSVVIGAKSMVREANGITSEVLDGLNPIQTDLGRIKDSYESARREDFSKALVDANNSVKKLTRKLPDLFIKIESINQQLLPLGNISDNVDRIRELIQQARDAANKVAIPMRFNGKSGVEVRLPNDLEDLKGYTSLSLFLQRPDLRENGGTEDMFVMYLGNKDASKDYIGMAVVDGQLTCVYNLGDREAEVQIDQVLTESESQEAVMDRVKFQRIYQFAKLNYTKEATSTKPKAPGVYDMESASSNTLLNLDPENAVFYVGGYPPGFELPRRLRFPPYKGCIELDDLNENVLSLYNFKTTFNLNTTEVEPCRRRKEESDKNYFEGTGYARIPTQPNAPFPNFMQTIQTTVDRGLLFFAENQDNFISLNIEDGNLMVKYKLNSEPPKEKGIRDTINNGRDHMILISIGKSQKRMLINMNKHSIIIEGEIFDFSTYYLGGIPIAIRERFNISTPAFQGCMKNLKKTSGVVRLNDTVGVTKKCSEDWKLVRTASFSRGGQMSFTNLDVPSLDRFQLSFGFQTFQPSGTLLNHQTRTSSLLVTLEDGHIALSTRDSSSPIFKSPGTYMDGLLHHVSVISDTSGLRLLIDDQVLRRNQRLASFSNAQQSLSMGGGYFEGCISNVFVQRMSQSPEVLDMASKSTKRDAFLGGCSLNKPPFLMLFKSPKGFNKARSFNVNQLLQDAPQAARSIEAWQDGKSCLPPLNTKATHRALQFGDSPTSHLLFKLPQELLKPRLQFSLDIQTTSSRGLVFHTGTRDSFVALYLSEGHVIFALGAGGKKLRLRSKERYHDGKWHSVVFGLSGRKVHLVVDGLRAQEGSLPGNSTISPREQVYLGLSPSRKSKSLPQHSFVGCLRNFQLDSKPLDSPSARSGVSPCLGGSLEKGIYFSQGGGHVVLANSVSLEPALTLTLSIRPRSLTGVLIHIASQSGEHLSVYMEAGKVTTSMNSEAGGTVTSITPKRSLCDGQWHSVTVSIKQHTLHLELDTDNSYTAGQLSFPPNSTRGSLHIGGVPDKLKMLTLPVWNSFFGCLKNIQVNHIPVPITEATDVQGSVSLNGCPDH.

Positions 1–31 (MAVALGRAPRSLPLLLTLLLLLLLRMSPSWS) are cleaved as a signal peptide. The region spanning 40 to 295 (SSRSLHPPYF…SIKDISVGGR (256 aa)) is the Laminin N-terminal domain. Asn139 is a glycosylation site (N-linked (GlcNAc...) asparagine). The interval 295 to 725 (RCVCNGHAEA…NNYYFPDLHH (431 aa)) is domain V. 27 disulfides stabilise this stretch: Cys296–Cys305, Cys298–Cys316, Cys318–Cys327, Cys330–Cys350, Cys353–Cys362, Cys355–Cys387, Cys390–Cys399, Cys402–Cys420, Cys423–Cys433, Cys425–Cys440, Cys442–Cys451, Cys454–Cys464, Cys488–Cys500, Cys490–Cys506, Cys508–Cys517, Cys520–Cys530, Cys533–Cys545, Cys535–Cys552, Cys554–Cys563, Cys566–Cys583, Cys628–Cys642, Cys630–Cys649, Cys651–Cys660, Cys663–Cys678, Cys681–Cys693, Cys683–Cys700, and Cys702–Cys711. 8 consecutive Laminin EGF-like domains span residues 296–350 (CVCN…HNEC), 353–420 (CNCH…LHGC), 423–464 (CSCD…FPFC), 488–530 (CDCN…FPIC), 533–576 (CQCS…FPYC), 582–625 (VCHP…PRGC), 628–678 (CQCH…YFGC), and 681–725 (CQCD…DLHH). Residue Asn445 is glycosylated (N-linked (GlcNAc...) asparagine). The tract at residues 793 to 1262 (TEAISGRITL…VAFYHNGAIP (470 aa)) is domain IV 1 (domain IV B). The domain III B stretch occupies residues 1263–1462 (CECDPAGTAG…CFCFGVNTDC (200 aa)). 12 disulfide bridges follow: Cys1309–Cys1316, Cys1311–Cys1323, Cys1325–Cys1334, Cys1337–Cys1350, Cys1353–Cys1368, Cys1355–Cys1375, Cys1377–Cys1386, Cys1389–Cys1399, Cys1402–Cys1414, Cys1404–Cys1421, Cys1423–Cys1432, and Cys1435–Cys1450. 3 consecutive Laminin EGF-like domains span residues 1309-1352 (CNCG…GCDV), 1353-1401 (CNCS…ECVP), and 1402-1452 (CSCN…GCTK). N-linked (GlcNAc...) asparagine glycosylation is present at Asn1354. A Laminin EGF-like 12; first part domain is found at 1453-1462 (CFCFGVNTDC). Positions 1466–1650 (HKQRAKFVDM…SGPRAHLVEM (185 aa)) constitute a Laminin IV type A domain. The Laminin EGF-like 12; second part domain maps to 1651 to 1683 (CACPPDYTGDSCQGCRPGYYWDNKSLPVGRCVP). A domain III A region spans residues 1651–1818 (CACPPDYTGD…DGSPAEECDD (168 aa)). Asn1673 is a glycosylation site (N-linked (GlcNAc...) asparagine). Cystine bridges form between Cys1684–Cys1693, Cys1686–Cys1700, Cys1703–Cys1712, Cys1715–Cys1728, Cys1731–Cys1743, Cys1733–Cys1752, Cys1754–Cys1763, and Cys1766–Cys1781. Laminin EGF-like domains follow at residues 1684–1730 (CNCN…SCRV) and 1731–1783 (CPCP…SCQP). Residues 1784–1818 (CNCNSNGQLGPCDPLTGDCVNQEPKDGSPAEECDD) enclose the Laminin EGF-like 15; truncated domain. A domain II and I region spans residues 1819-2385 (CDSCVMTLLN…ARDAANKVAI (567 aa)). Coiled coils occupy residues 1851-1980 (TGAL…LRSR), 2012-2057 (VENN…HENE), 2088-2165 (LLQT…GDEL), and 2211-2238 (KRAK…QQVS). Asn2159 is a glycosylation site (N-linked (GlcNAc...) asparagine). N-linked (GlcNAc...) asparagine glycosylation is present at Asn2261. A Cell attachment site motif is present at residues 2274–2276 (RGD). The stretch at 2318–2383 (SARREDFSKA…QQARDAANKV (66 aa)) forms a coiled coil. Residues Asn2332, Asn2361, Asn2498, Asn2580, and Asn2747 are each glycosylated (N-linked (GlcNAc...) asparagine). Laminin G-like domains follow at residues 2386 to 2587 (PMRF…VEPC), 2594 to 2756 (SDKN…TKKC), 2763 to 2923 (VRTA…LGGC), 2983 to 3147 (ALQF…VSPC), and 3154 to 3327 (KGIY…LNGC). 3 disulfides stabilise this stretch: Cys2557-Cys2587, Cys2733-Cys2756, and Cys2891-Cys2923. A glycan (N-linked (GlcNAc...) asparagine) is linked at Asn3094. A disulfide bond links Cys3124 and Cys3147. An N-linked (GlcNAc...) asparagine glycan is attached at Asn3270. An intrachain disulfide couples Cys3299 to Cys3327.

As to quaternary structure, laminin is a complex glycoprotein, consisting of three different polypeptide chains (alpha, beta, gamma), which are bound to each other by disulfide bonds into a cross-shaped molecule comprising one long and three short arms with globules at each end. Alpha-3 is a subunit of laminin-5 (laminin-332 or epiligrin/kalinin/nicein), laminin-6 (laminin-311 or K-laminin) and laminin-7 (laminin-321 or KS-laminin). As to expression, basal membrane of the upper alimentary tract and urinary and nasal epithelia, salivary glands and teeth (both variants). Isoform A is predominantly expressed in skin, hair follicles and developing neurons of the trigeminal ganglion. Isoform B was found in bronchi, alveoli, stomach, intestinal crypts, whisker pads, CNS, telencephalic neuroectoderm, thalamus, Rathke pouch and periventricular subependymal germinal layer.

It is found in the secreted. Its subcellular location is the extracellular space. The protein localises to the extracellular matrix. It localises to the basement membrane. Its function is as follows. Binding to cells via a high affinity receptor, laminin is thought to mediate the attachment, migration and organization of cells into tissues during embryonic development by interacting with other extracellular matrix components. In terms of biological role, laminin-5 is thought to be involved in (1) cell adhesion via integrin alpha-3/beta-1 in focal adhesion and integrin alpha-6/beta-4 in hemidesmosomes, (2) signal transduction via tyrosine phosphorylation of pp125-FAK and p80, (3) differentiation of keratinocytes. This Mus musculus (Mouse) protein is Laminin subunit alpha-3 (Lama3).